Reading from the N-terminus, the 405-residue chain is Serine-type anaerobic sulfatase-maturating enzyme (405 aa).

The 232-residue stretch at 18-249 (PRSPVPFHIL…QWRKRCDRGR (232 aa)) folds into the Radical SAM core domain. The [4Fe-4S] cluster site is built by C35 and C39. Y41 serves as a coordination point for S-adenosyl-L-methionine. C42 is a [4Fe-4S] cluster binding site. 3 residues coordinate S-adenosyl-L-methionine: G84, S140, and R152. Positions 270, 276, and 291 each coordinate [4Fe-4S] cluster. D292 acts as the Proton acceptor in catalysis. Residues C331, C334, C340, C344, and C357 each coordinate [4Fe-4S] cluster.

This sequence belongs to the radical SAM superfamily. Anaerobic sulfatase-maturating enzyme family. As to quaternary structure, monomer. Interacts with AtsA prior to its export to the periplasm. It depends on [4Fe-4S] cluster as a cofactor.

It localises to the cytoplasm. It carries out the reaction L-seryl-[sulfatase] + S-adenosyl-L-methionine = 3-oxo-L-alanyl-[sulfatase] + 5'-deoxyadenosine + L-methionine + H(+). It functions in the pathway protein modification; sulfatase oxidation. Involved in 'Ser-type' sulfatase maturation under anaerobic conditions. Catalyzes the post-translational modification of serine ('Ser-72' in the arylsulfatase AtsA) into 3-oxoalanine (also known as C(alpha)-formylglycine (FGly)), by a free radical chemical mechanism initiated via the reductive cleavage of S-adenosyl-L-methionine (SAM). The protein is Serine-type anaerobic sulfatase-maturating enzyme of Klebsiella aerogenes (Enterobacter aerogenes).